The chain runs to 1374 residues: DNA-directed RNA polymerase subunit beta (1374 aa).

This sequence belongs to the RNA polymerase beta chain family. The RNAP catalytic core consists of 2 alpha, 1 beta, 1 beta' and 1 omega subunit. When a sigma factor is associated with the core the holoenzyme is formed, which can initiate transcription.

The catalysed reaction is RNA(n) + a ribonucleoside 5'-triphosphate = RNA(n+1) + diphosphate. DNA-dependent RNA polymerase catalyzes the transcription of DNA into RNA using the four ribonucleoside triphosphates as substrates. The protein is DNA-directed RNA polymerase subunit beta of Rickettsia typhi (strain ATCC VR-144 / Wilmington).